A 328-amino-acid chain; its full sequence is uncharacterized protein (328 aa).

In terms of domain architecture, SIS spans 37–179 (LTEKLLCHQG…AMTLLRCRKI (143 aa)). Position 52-57 (52-57 (GIGKSG)) interacts with ATP. 2 CBS domains span residues 207 to 264 (PRTE…GGDI) and 273 to 328 (MTRN…AGLL).

It belongs to the SIS family. GutQ/KpsF subfamily.

This is an uncharacterized protein from Chlamydia trachomatis serovar D (strain ATCC VR-885 / DSM 19411 / UW-3/Cx).